Reading from the N-terminus, the 266-residue chain is GTP-binding protein Rhes (266 aa).

Residue 26 to 33 (GASRVGKS) coordinates GTP. Residues 48-56 (YTPTIEDFH) carry the Effector region motif. GTP contacts are provided by residues 73–77 (DTSGN) and 140–143 (NKND). The segment at 189-235 (MAKLPHEMSPALHRKISVQYGDAFHPRPFCMRRVKEMDAYGMVSPFA) is interaction with GNB1, GNB2 and GNB3. Cysteine methyl ester is present on C263. C263 carries the S-farnesyl cysteine lipid modification. Residues 264 to 266 (TIQ) constitute a propeptide, removed in mature form.

This sequence belongs to the small GTPase superfamily. RasD family. As to quaternary structure, monomer (Potential). Interacts with PIK3CA and UBE2I. Interacts with GNB1, GNB2 and GNB3. Interacts with HTT; interacts with mutant HTT (mHTT) with a much higher affinity than wild type HTT. Farnesylated. Farnesylation is required for membrane targeting. As to expression, pancreatic endocrine cells (islets of Langerhans).

The protein localises to the cell membrane. Functionally, GTPase signaling protein that binds to and hydrolyzes GTP. Regulates signaling pathways involving G-proteins-coupled receptor and heterotrimeric proteins such as GNB1, GNB2 and GNB3. May be involved in selected striatal competencies, mainly locomotor activity and motor coordination. In Homo sapiens (Human), this protein is GTP-binding protein Rhes (RASD2).